A 181-amino-acid polypeptide reads, in one-letter code: Cytochrome P450 monooxygenase dtpC (181 aa).

Residue cysteine 125 participates in heme binding.

Belongs to the cytochrome P450 family. The cofactor is heme.

The protein operates within alkaloid biosynthesis. It functions in the pathway secondary metabolite biosynthesis. Functionally, cytochrome P450 monooxygenase; part of the gene cluster that mediates the biosynthesis of the dimeric diketopiperazine alkaloid ditryptophenaline. The nonribosomal peptide synthase dtpA accepts L-tryptophan and L-phenylalanine as its substrates and forms the phenylalanyl-tryptophanyl cyclic dipeptide product cyclophenylalanyltryptophenyl. The N-methyltransferase dtpB is responsible for the N-methylation of cyclophenylalanyltryptophenyl to yield cyclo-N-methylphenylalanyltryptophenyl. The cytochrome P450 monooxygenase is responsible not only for pyrroloindole ring formation but also for concurrent dimerization of N-methylphenylalanyltryptophanyl diketopiperazine monomers into a homodimeric product. The chain is Cytochrome P450 monooxygenase dtpC from Aspergillus flavus (strain ATCC 200026 / FGSC A1120 / IAM 13836 / NRRL 3357 / JCM 12722 / SRRC 167).